An 889-amino-acid polypeptide reads, in one-letter code: Cytoplasmic aconitate hydratase (889 aa).

Residues Gln-86 and 205 to 207 (DSH) each bind substrate. The [4Fe-4S] cluster site is built by Cys-437, Cys-503, and Cys-506. Residues Arg-536, Arg-541, Arg-699, and 779-780 (SR) contribute to the substrate site.

It belongs to the aconitase/IPM isomerase family. In terms of assembly, interacts (when associated with the 4Fe-4S) with FBXL5. Interacts with frataxin(81-210). Requires [4Fe-4S] cluster as cofactor.

The protein localises to the cytoplasm. It is found in the cytosol. It catalyses the reaction citrate = D-threo-isocitrate. Bifunctional iron sensor that switches between 2 activities depending on iron availability. Iron deprivation, promotes its mRNA binding activity through which it regulates the expression of genes involved in iron uptake, sequestration and utilization. Binds to iron-responsive elements (IRES) in the untranslated region of target mRNAs preventing for instance the translation of ferritin and aminolevulinic acid synthase and stabilizing the transferrin receptor mRNA. In terms of biological role, conversely, when cellular iron levels are high, binds a 4Fe-4S cluster which precludes RNA binding activity and promotes the aconitase activity, the isomerization of citrate to isocitrate via cis-aconitate. The chain is Cytoplasmic aconitate hydratase (Aco1) from Mus musculus (Mouse).